The sequence spans 154 residues: MAARLCCQLDPARDVLCLRPVGAESRGRPVSGSLGALPSPSPSAVPADHGAHLSLRGLPVCAFSSAGPCALRFTSARRMETTVNANQVLPKVLHKRTLGLSALSTTDLEAYFKDCVFKDWEELGEEIRLKVFVLGGCRHKLVCVPAPCNFFTSA.

Positions P68–F117 are mitochondrial targeting sequence.

This sequence belongs to the orthohepadnavirus protein X family. As to quaternary structure, may form homodimer. May interact with host CEBPA, CFLAR, CREB1, DDB1, E4F1, HBXIP, HSPD1/HSP60, NFKBIA, POLR2E and SMAD4. Interacts with host SMC5-SMC6 complex and induces its degradation. Interacts with host TRPC4AP; leading to prevent ubiquitination of TRPC4AP. Interacts with host PLSCR1; this interaction promotes ubiquitination and degradation of HBx and impairs HBx-mediated cell proliferation. Post-translationally, a fraction may be phosphorylated in insect cells and HepG2 cells, a human hepatoblastoma cell line. Phosphorylated in vitro by host protein kinase C or mitogen-activated protein kinase. N-acetylated in insect cells.

The protein localises to the host cytoplasm. It is found in the host nucleus. The protein resides in the host mitochondrion. Its function is as follows. Multifunctional protein that plays a role in silencing host antiviral defenses and promoting viral transcription. Does not seem to be essential for HBV infection. May be directly involved in development of cirrhosis and liver cancer (hepatocellular carcinoma). Most of cytosolic activities involve modulation of cytosolic calcium. The effect on apoptosis is controversial depending on the cell types in which the studies have been conducted. May induce apoptosis by localizing in mitochondria and causing loss of mitochondrial membrane potential. May also modulate apoptosis by binding host CFLAR, a key regulator of the death-inducing signaling complex (DISC). Promotes viral transcription by using the host E3 ubiquitin ligase DDB1 to target the SMC5-SMC6 complex to proteasomal degradation. This host complex would otherwise bind to viral episomal DNA, and prevents its transcription. Moderately stimulates transcription of many different viral and cellular transcription elements. Promoters and enhancers stimulated by HBx contain DNA binding sites for NF-kappa-B, AP-1, AP-2, c-EBP, ATF/CREB, or the calcium-activated factor NF-AT. This Homo sapiens (Human) protein is Protein X.